A 332-amino-acid polypeptide reads, in one-letter code: Glycerol-3-phosphate dehydrogenase [NAD(P)+] (332 aa).

Residues W11, R30, and K108 each contribute to the NADPH site. Sn-glycerol 3-phosphate is bound by residues K108, G137, and S139. Position 141 (A141) interacts with NADPH. K192, D245, S255, R256, and N257 together coordinate sn-glycerol 3-phosphate. The active-site Proton acceptor is K192. R256 contributes to the NADPH binding site. 2 residues coordinate NADPH: V280 and E282.

It belongs to the NAD-dependent glycerol-3-phosphate dehydrogenase family.

It localises to the cytoplasm. The catalysed reaction is sn-glycerol 3-phosphate + NAD(+) = dihydroxyacetone phosphate + NADH + H(+). It catalyses the reaction sn-glycerol 3-phosphate + NADP(+) = dihydroxyacetone phosphate + NADPH + H(+). It participates in membrane lipid metabolism; glycerophospholipid metabolism. In terms of biological role, catalyzes the reduction of the glycolytic intermediate dihydroxyacetone phosphate (DHAP) to sn-glycerol 3-phosphate (G3P), the key precursor for phospholipid synthesis. The protein is Glycerol-3-phosphate dehydrogenase [NAD(P)+] of Burkholderia vietnamiensis (strain G4 / LMG 22486) (Burkholderia cepacia (strain R1808)).